A 219-amino-acid chain; its full sequence is Probable GTP-binding protein EngB (219 aa).

The region spanning 42 to 219 (SVPEIAFAGR…RTAVLEAVEL (178 aa)) is the EngB-type G domain. GTP is bound by residues 50–57 (GRSNVGKS), 77–81 (GRTQE), 97–100 (DMPG), 164–167 (TKAD), and 198–200 (TSS). Positions 57 and 79 each coordinate Mg(2+).

Belongs to the TRAFAC class TrmE-Era-EngA-EngB-Septin-like GTPase superfamily. EngB GTPase family. Requires Mg(2+) as cofactor.

Its function is as follows. Necessary for normal cell division and for the maintenance of normal septation. The chain is Probable GTP-binding protein EngB from Sphingopyxis alaskensis (strain DSM 13593 / LMG 18877 / RB2256) (Sphingomonas alaskensis).